A 166-amino-acid polypeptide reads, in one-letter code: Lipoprotein signal peptidase (166 aa).

Helical transmembrane passes span 9-29 (ASGA…FDQL), 45-65 (ALTS…FGFL), 71-91 (WQRW…CFLL), and 100-120 (FSVS…DRLV). Catalysis depends on residues D126 and D144. Residues 135–155 (WHFPAFNLADSAITIGAVLLI) form a helical membrane-spanning segment.

The protein belongs to the peptidase A8 family.

It is found in the cell inner membrane. The catalysed reaction is Release of signal peptides from bacterial membrane prolipoproteins. Hydrolyzes -Xaa-Yaa-Zaa-|-(S,diacylglyceryl)Cys-, in which Xaa is hydrophobic (preferably Leu), and Yaa (Ala or Ser) and Zaa (Gly or Ala) have small, neutral side chains.. Its pathway is protein modification; lipoprotein biosynthesis (signal peptide cleavage). Functionally, this protein specifically catalyzes the removal of signal peptides from prolipoproteins. In Burkholderia cenocepacia (strain ATCC BAA-245 / DSM 16553 / LMG 16656 / NCTC 13227 / J2315 / CF5610) (Burkholderia cepacia (strain J2315)), this protein is Lipoprotein signal peptidase.